The primary structure comprises 907 residues: Leucine-rich repeat-containing G-protein coupled receptor 5 (907 aa).

An N-terminal signal peptide occupies residues 1 to 21 (MDTSSVGVLLSLPVLLQLAAG). Over 22–553 (GGSPRPGTLL…SPGPFKLCEY (532 aa)) the chain is Extracellular. The 32-residue stretch at 33–64 (GCPAHCQCEPDGRMLLRVDCSDLGLSELPSNL) folds into the LRRNT domain. 2 disulfide bridges follow: cysteine 34–cysteine 40 and cysteine 38–cysteine 52. 17 LRR repeats span residues 44-64 (GRMLLRVDCSDLGLSELPSNL), 65-88 (SVFTSYLDLSMNNISQLPPSPLHS), 89-112 (LRFLEELRLAGNALTYIPKGAFAG), 114-136 (YSLKVLMLQNNHLRQVPTEALQN), 137-160 (LRSLQSLRLDANRISSVPPSCFSG), 162-184 (HSLRHLWLDDNALTEIPVQAFRS), 185-208 (LSALQAMTLALNKIHHIPDYAFGN), 209-232 (LSSLVVLHLHNNRIHSLGKKCFDG), 233-256 (LHSLETLDLNYNNLDEFPTAVRTL), 257-279 (SNLKELGFHSNNIKSIPEKAFVG), 281-303 (PSLITIHFYDNPIQLVGRSAFQH), 304-327 (LPELRTLTLNGASQITEFPDLTGT), 328-350 (ASLESLTLTGAQISSLPQTVCDQ), 351-375 (LPNLQVLDLSYNLLEDLPSFSVCQK), 377-396 (QKIDLRHNEIYEIQADTFQQ), 397-420 (LFSLRSLNLAWNKIAIIDPNAFST), and 421-444 (LPSLRKLDLSSNRLSSIPVTGLHG). 2 N-linked (GlcNAc...) asparagine glycosylation sites follow: asparagine 63 and asparagine 77. Asparagine 208 carries an N-linked (GlcNAc...) asparagine glycan. Cysteine 348 and cysteine 373 are disulfide-bonded. A disulfide bond links cysteine 479 and cysteine 541. Residue asparagine 500 is glycosylated (N-linked (GlcNAc...) asparagine). The helical transmembrane segment at 554–574 (LFGSWLIRIGVWTIAVLALTC) threads the bilayer. One copy of the LRR 18 repeat lies at 564-585 (VWTIAVLALTCNALVTSTVFRA). Over 575 to 593 (NALVTSTVFRAAVYISSIK) the chain is Cytoplasmic. Residues 594–614 (LLIGLIAAVNMLMGVSSAVLA) traverse the membrane as a helical segment. The Extracellular segment spans residues 615 to 638 (GVDAFTFGSFAQHGAWWEQAVGCQ). Cysteine 637 and cysteine 712 form a disulfide bridge. A helical transmembrane segment spans residues 639–659 (VVGFLSIFASESSVFLLTLAA). At 660–682 (LERGWSVKCSAKFETQTPFPSLR) the chain is on the cytoplasmic side. Residues 683-703 (ATLALCALLAGTVAAVPLLGG) traverse the membrane as a helical segment. Over 704 to 723 (SEYSASPLCLPLPFGEPRAT) the chain is Extracellular. The helical transmembrane segment at 724–744 (GYMVALVLLNSLCFLVMTVAY) threads the bilayer. Residues 745-767 (TRLYCHLEKGDLESMWDCSMVKH) are Cytoplasmic-facing. The chain crosses the membrane as a helical span at residues 768–788 (VALLLFTNCILHCPVAFLSFS). Topologically, residues 789-802 (SLLNLTFISPEVIK) are extracellular. N-linked (GlcNAc...) asparagine glycosylation is present at asparagine 792. The chain crosses the membrane as a helical span at residues 803–823 (FILLVIVPLPACLNPLLYILF). Over 824-907 (NPHFKEDLGS…LSSVAFVPCL (84 aa)) the chain is Cytoplasmic.

This sequence belongs to the G-protein coupled receptor 1 family. Identified in a complex composed of RNF43, LGR5 and RSPO1. Also interacts with other R-spondin ligands, including RSPO2, RSPO3 and RSPO4.

It localises to the cell membrane. It is found in the golgi apparatus. The protein localises to the trans-Golgi network membrane. Receptor for R-spondins that potentiates the canonical Wnt signaling pathway and acts as a stem cell marker of the intestinal epithelium and the hair follicle. Upon binding to R-spondins (RSPO1, RSPO2, RSPO3 or RSPO4), associates with phosphorylated LRP6 and frizzled receptors that are activated by extracellular Wnt receptors, triggering the canonical Wnt signaling pathway to increase expression of target genes. In contrast to classical G-protein coupled receptors, does not activate heterotrimeric G-proteins to transduce the signal. Involved in the development and/or maintenance of the adult intestinal stem cells during postembryonic development. This Bos taurus (Bovine) protein is Leucine-rich repeat-containing G-protein coupled receptor 5 (LGR5).